The following is a 394-amino-acid chain: Teichoic acid poly(glycerol phosphate) polymerase (394 aa).

This sequence belongs to the CDP-glycerol glycerophosphotransferase family.

It localises to the cell membrane. The enzyme catalyses 4-O-[(2R)-glycerylphospho]-N-acetyl-beta-D-mannosaminyl-(1-&gt;4)-N-acetyl-alpha-D-glucosaminyl di-trans,octa-cis-undecaprenyl diphosphate + n CDP-glycerol = 4-O-{[(2R)-1-glycerylphospho](n)-(2R)-1-glycerylphospho}-N-acetyl-beta-D-mannosaminyl-(1-&gt;4)-N-acetyl-alpha-D-glucosaminyl undecaprenyl diphosphate + n CMP + n H(+). Catalyzes the addition of further 2-8 glycerol phosphate units from CDP-glycerol to the single glycerol phosphate unit bound to the prenolpyrophosphate-linked disaccharide. The function in the cell is unknown since the product is not part of the poly(ribitol phosphate) teichoic acid found in the cell walls. The chain is Teichoic acid poly(glycerol phosphate) polymerase (tarF) from Bacillus spizizenii (strain ATCC 23059 / NRRL B-14472 / W23) (Bacillus subtilis subsp. spizizenii).